Here is a 536-residue protein sequence, read N- to C-terminus: Cytochrome P450 78A7 (536 aa).

Residues 36–56 (LFLAVVFLSIVTWALAGGGGV) form a helical membrane-spanning segment. A heme-binding site is contributed by Cys481.

This sequence belongs to the cytochrome P450 family. It depends on heme as a cofactor.

It localises to the membrane. Functionally, functions probably in association with CYP78A5 in regulating relative growth of the shoot apical meristem and plant organs via a non-cell-autonomous signal. The polypeptide is Cytochrome P450 78A7 (CYP78A7) (Arabidopsis thaliana (Mouse-ear cress)).